The following is an 84-amino-acid chain: UPF0457 protein BCE33L2961 (84 aa).

This sequence belongs to the UPF0457 family.

This Bacillus cereus (strain ZK / E33L) protein is UPF0457 protein BCE33L2961.